We begin with the raw amino-acid sequence, 282 residues long: Nucleotide-binding protein PXO_02223 (282 aa).

Residue glycine 5–serine 12 participates in ATP binding. A GTP-binding site is contributed by aspartate 57–serine 60.

This sequence belongs to the RapZ-like family.

In terms of biological role, displays ATPase and GTPase activities. In Xanthomonas oryzae pv. oryzae (strain PXO99A), this protein is Nucleotide-binding protein PXO_02223.